The primary structure comprises 198 residues: Recombination protein RecR (198 aa).

The C4-type zinc finger occupies 57-72 (CSICCNLSEHDPCPIC). A Toprim domain is found at 80–175 (NIVCVVETPQ…KVTRLGYGLP (96 aa)).

Belongs to the RecR family.

In terms of biological role, may play a role in DNA repair. It seems to be involved in an RecBC-independent recombinational process of DNA repair. It may act with RecF and RecO. The chain is Recombination protein RecR from Endomicrobium trichonymphae.